Here is a 372-residue protein sequence, read N- to C-terminus: MANVSLRNVGKSYGDVHISKDINLEINEGEFVVFVGPSGCGKSTLLRMIAGLEDITTGELYIGEKLMNDVEPSKRGIGMVFQSYALYPHLDVADNMSFGLKLAGVKKNERDQRVNQVAEILQLAHLLDRKPKALSGGQRQRVAIGRTLVSQPEVFLLDEPLSNLDAALRVQMRVEISKLHKKLNRTMIYVTHDQVEAMTLADKIVVLNAGGVAQVGKPLELYHYPANRFVAGFIGSPKMNFLPVKVTAVEENQVKIELPDANHHNFWIPVSGEGVNIGENLSLGIRPEHLVPAEQAQVSLRGIVQVVELLGNETQIHLEIPEIKQPSLIYRQNDVILVNEGDEMNIGIVPERCHLFKEDGTACQRLFAEKGV.

In terms of domain architecture, ABC transporter spans V4–I234. Residue G36–S43 coordinates ATP.

It belongs to the ABC transporter superfamily. Maltooligosaccharide importer (TC 3.A.1.1.1) family. In terms of assembly, the complex is composed of two ATP-binding proteins (MalK), two transmembrane proteins (MalG and MalK) and a solute-binding protein (MalE).

The protein resides in the cell inner membrane. The catalysed reaction is D-maltose(out) + ATP + H2O = D-maltose(in) + ADP + phosphate + H(+). Its function is as follows. Part of the ABC transporter complex MalEFGK involved in maltose/maltodextrin import. Responsible for energy coupling to the transport system. In Mannheimia succiniciproducens (strain KCTC 0769BP / MBEL55E), this protein is Maltose/maltodextrin import ATP-binding protein MalK.